We begin with the raw amino-acid sequence, 25 residues long: C-reactive protein P2 subunit 4 (25 aa).

Residues 1 to 25 (GRSLVFPEETANSFVELFPAKELSL) form the Pentraxin (PTX) domain.

This sequence belongs to the pentraxin family. Heteropentamer. Discoid arrangement of 5 non-covalently bound subunits 1, 2, 3 and 4. Ca(2+) serves as cofactor. Glycosylated.

Its subcellular location is the secreted. In terms of biological role, displays several functions associated with host defense: it promotes agglutination, bacterial capsular swelling, phagocytosis, and complement fixation through its calcium-dependent binding to phosphorylcholine. The polypeptide is C-reactive protein P2 subunit 4 (Gadus morhua (Atlantic cod)).